The sequence spans 223 residues: Probable Brix domain-containing ribosomal biogenesis protein (223 aa).

Residues 1–196 enclose the Brix domain; it reads MMLITTSHRP…IWIMEDGRRW (196 aa).

In terms of biological role, probably involved in the biogenesis of the ribosome. In Pyrococcus furiosus (strain ATCC 43587 / DSM 3638 / JCM 8422 / Vc1), this protein is Probable Brix domain-containing ribosomal biogenesis protein.